Consider the following 273-residue polypeptide: GATA-type zinc finger protein 1 (273 aa).

Disordered regions lie at residues 99-143 (RDSK…ERVD) and 172-201 (SSRS…AGSE). A GATA-type zinc finger spans residues 208–232 (CASCRTQRTPLWRDAEDGTPLCNAC).

It is found in the nucleus. Its function is as follows. Transcriptional regulator that plays a key role in germ cell development. Determines the oogenic fate by activating key genes for the oogenic program and meiotic prophase entry. Acts downstream of bone morphogenetic protein (BMP) by regulating expression of genes required for the oogenic programs, which are repressed by Polycomb activities in sexually uncommitted germ cells. Regulates expression of STRA8, a central downstream effector for the meiotic program. Acts independently of retinoic acid (RA). In males, not required for germ-cell sex determination, but required to allow the spermatogonia to efficiently accomplish the meiotic prophase. The sequence is that of GATA-type zinc finger protein 1 from Homo sapiens (Human).